The chain runs to 885 residues: Protein arg11, mitochondrial (885 aa).

Residues 1 to 59 constitute a mitochondrion transit peptide; sequence MLIELQQIVKSGLVRNGAKHCTKRSLLCSNASVIASKRFQGSFAPGQQQPLNPLAKPIE. The N-acetyltransferase domain occupies 346 to 499; the sequence is FVINKHDSLD…SDKPFADAII (154 aa). Low complexity predominate over residues 503-523; sequence STKPPTASSTTNNPSSSQINQ. A disordered region spans residues 503–532; it reads STKPPTASSTTNNPSSSQINQKRSYSTSSL. The active site involves Cys703.

In the N-terminal section; belongs to the acetylglutamate kinase family. The protein in the C-terminal section; belongs to the NAGSA dehydrogenase family. The protein precursor is probably cleaved into the two biologically active enzymes, the kinase and the reductase.

The protein localises to the mitochondrion. The enzyme catalyses N-acetyl-L-glutamate 5-semialdehyde + phosphate + NADP(+) = N-acetyl-L-glutamyl 5-phosphate + NADPH + H(+). The catalysed reaction is N-acetyl-L-glutamate + ATP = N-acetyl-L-glutamyl 5-phosphate + ADP. The protein operates within amino-acid biosynthesis; L-arginine biosynthesis; N(2)-acetyl-L-ornithine from L-glutamate: step 2/4. It participates in amino-acid biosynthesis; L-arginine biosynthesis; N(2)-acetyl-L-ornithine from L-glutamate: step 3/4. With respect to regulation, the kinase activity is inhibited by arginine. In Schizosaccharomyces pombe (strain 972 / ATCC 24843) (Fission yeast), this protein is Protein arg11, mitochondrial (arg11).